We begin with the raw amino-acid sequence, 2095 residues long: Oxygen-regulated protein 1 (2095 aa).

2 Doublecortin domains span residues 35 to 117 (KRIS…VDLD) and 157 to 236 (RRLV…GNYD). Disordered regions lie at residues 358–379 (GLSNNDEKNKKSSYPGKTDYGP), 643–688 (ENRK…GKIP), 863–887 (GAEVSEQHVTTRADPLASLKKPDFP), 1400–1430 (NKKKSISSDKEESRTSEEPRSITNSMTSSER), and 1572–1595 (SGYPCKASSNSHNDDSGQEKEPTR). The span at 1405–1419 (ISSDKEESRTSEEPR) shows a compositional bias: basic and acidic residues. Polar residues predominate over residues 1420-1430 (SITNSMTSSER). Positions 1583–1595 (HNDDSGQEKEPTR) are enriched in basic and acidic residues.

Interacts (via the doublecortin domains) with microtubules. Interacts with RP1L1. Interacts with MAK. As to expression, expressed in the cell bodies and inner segments of photoreceptors. Not found in liver, spleen, kidney, brain, thymus, muscle, heart, lung and testis.

It localises to the cytoplasm. Its subcellular location is the cytoskeleton. The protein localises to the cilium axoneme. It is found in the cell projection. The protein resides in the cilium. It localises to the photoreceptor outer segment. Microtubule-associated protein regulating the stability and length of the microtubule-based axoneme of photoreceptors. Required for the differentiation of photoreceptor cells, it plays a role in the organization of the outer segment of rod and cone photoreceptors ensuring the correct orientation and higher-order stacking of outer segment disks along the photoreceptor axoneme. The chain is Oxygen-regulated protein 1 (Rp1) from Mus musculus (Mouse).